The primary structure comprises 1385 residues: DNA-directed RNA polymerase subunit beta' (1385 aa).

The Zn(2+) site is built by Cys-75, Cys-77, Cys-90, and Cys-93. The Mg(2+) site is built by Asp-466, Asp-468, and Asp-470. Zn(2+) contacts are provided by Cys-809, Cys-883, Cys-890, and Cys-893.

This sequence belongs to the RNA polymerase beta' chain family. As to quaternary structure, the RNAP catalytic core consists of 2 alpha, 1 beta, 1 beta' and 1 omega subunit. When a sigma factor is associated with the core the holoenzyme is formed, which can initiate transcription. Requires Mg(2+) as cofactor. It depends on Zn(2+) as a cofactor.

It carries out the reaction RNA(n) + a ribonucleoside 5'-triphosphate = RNA(n+1) + diphosphate. In terms of biological role, DNA-dependent RNA polymerase catalyzes the transcription of DNA into RNA using the four ribonucleoside triphosphates as substrates. The protein is DNA-directed RNA polymerase subunit beta' of Nitratidesulfovibrio vulgaris (strain ATCC 29579 / DSM 644 / CCUG 34227 / NCIMB 8303 / VKM B-1760 / Hildenborough) (Desulfovibrio vulgaris).